We begin with the raw amino-acid sequence, 85 residues long: Cell division topological specificity factor (85 aa).

Belongs to the MinE family.

Its function is as follows. Prevents the cell division inhibition by proteins MinC and MinD at internal division sites while permitting inhibition at polar sites. This ensures cell division at the proper site by restricting the formation of a division septum at the midpoint of the long axis of the cell. The sequence is that of Cell division topological specificity factor from Xylella fastidiosa (strain M12).